A 1244-amino-acid chain; its full sequence is ATP-dependent helicase/nuclease subunit A (1244 aa).

The UvrD-like helicase ATP-binding domain maps to 4–475; sequence KKWTAEQLAA…IGLSKNFRSR (472 aa). 25 to 32 is a binding site for ATP; it reads AAAGAGKT. Positions 515–816 constitute a UvrD-like helicase C-terminal domain; the sequence is EDVKTATGPV…RIMSIHKSKG (302 aa). Residues 538–559 form a disordered region; the sequence is EQNTDSAEEKLTDGEEQEDLDS.

This sequence belongs to the helicase family. AddA subfamily. In terms of assembly, heterodimer of AddA and AddB/RexB. Mg(2+) is required as a cofactor.

It carries out the reaction Couples ATP hydrolysis with the unwinding of duplex DNA by translocating in the 3'-5' direction.. The enzyme catalyses ATP + H2O = ADP + phosphate + H(+). Functionally, the heterodimer acts as both an ATP-dependent DNA helicase and an ATP-dependent, dual-direction single-stranded exonuclease. Recognizes the chi site generating a DNA molecule suitable for the initiation of homologous recombination. The AddA nuclease domain is required for chi fragment generation; this subunit has the helicase and 3' -&gt; 5' nuclease activities. This chain is ATP-dependent helicase/nuclease subunit A, found in Desulforamulus reducens (strain ATCC BAA-1160 / DSM 100696 / MI-1) (Desulfotomaculum reducens).